The sequence spans 59 residues: Large ribosomal subunit protein uL30 (59 aa).

This sequence belongs to the universal ribosomal protein uL30 family. Part of the 50S ribosomal subunit.

This chain is Large ribosomal subunit protein uL30, found in Citrifermentans bemidjiense (strain ATCC BAA-1014 / DSM 16622 / JCM 12645 / Bem) (Geobacter bemidjiensis).